A 242-amino-acid polypeptide reads, in one-letter code: Uridylate kinase (242 aa).

ATP is bound at residue 12–15; the sequence is KLSG. Residues 20 to 25 are involved in allosteric activation by GTP; the sequence is GEKGYG. Glycine 55 is a UMP binding site. The ATP site is built by glycine 56 and arginine 60. UMP is bound by residues aspartate 75 and 136 to 143; that span reads TGNPYFST. ATP-binding residues include tyrosine 169 and aspartate 172.

This sequence belongs to the UMP kinase family. In terms of assembly, homohexamer.

It is found in the cytoplasm. The catalysed reaction is UMP + ATP = UDP + ADP. Its pathway is pyrimidine metabolism; CTP biosynthesis via de novo pathway; UDP from UMP (UMPK route): step 1/1. Its activity is regulated as follows. Allosterically activated by GTP. Inhibited by UTP. In terms of biological role, catalyzes the reversible phosphorylation of UMP to UDP. In Carboxydothermus hydrogenoformans (strain ATCC BAA-161 / DSM 6008 / Z-2901), this protein is Uridylate kinase.